Here is a 168-residue protein sequence, read N- to C-terminus: Xanthine-guanine phosphoribosyltransferase (168 aa).

5-phospho-alpha-D-ribose 1-diphosphate is bound by residues 46 to 47 (RG) and 101 to 109 (DDLVDSGVT). Mg(2+) is bound at residue aspartate 102. Residue aspartate 105 participates in guanine binding. Positions 105 and 148 each coordinate xanthine. Residues 105–109 (DSGVT) and 147–148 (WV) each bind GMP.

It belongs to the purine/pyrimidine phosphoribosyltransferase family. XGPT subfamily. Homotetramer. Mg(2+) serves as cofactor.

The protein resides in the cell inner membrane. The catalysed reaction is GMP + diphosphate = guanine + 5-phospho-alpha-D-ribose 1-diphosphate. The enzyme catalyses XMP + diphosphate = xanthine + 5-phospho-alpha-D-ribose 1-diphosphate. It carries out the reaction IMP + diphosphate = hypoxanthine + 5-phospho-alpha-D-ribose 1-diphosphate. It participates in purine metabolism; GMP biosynthesis via salvage pathway; GMP from guanine: step 1/1. The protein operates within purine metabolism; XMP biosynthesis via salvage pathway; XMP from xanthine: step 1/1. Purine salvage pathway enzyme that catalyzes the transfer of the ribosyl-5-phosphate group from 5-phospho-alpha-D-ribose 1-diphosphate (PRPP) to the N9 position of the 6-oxopurines guanine and xanthine to form the corresponding ribonucleotides GMP (guanosine 5'-monophosphate) and XMP (xanthosine 5'-monophosphate), with the release of PPi. To a lesser extent, also acts on hypoxanthine. This chain is Xanthine-guanine phosphoribosyltransferase, found in Gluconobacter oxydans (strain 621H) (Gluconobacter suboxydans).